A 1285-amino-acid polypeptide reads, in one-letter code: DNA polymerase II large subunit (1285 aa).

Positions 565–586 (TRIGGRMGRPGKSKPREMRPPP) are disordered.

It belongs to the archaeal DNA polymerase II family. Heterodimer of a large subunit and a small subunit. Post-translationally, this protein undergoes a protein self splicing that involves a post-translational excision of the intervening region (intein) followed by peptide ligation.

The catalysed reaction is DNA(n) + a 2'-deoxyribonucleoside 5'-triphosphate = DNA(n+1) + diphosphate. It carries out the reaction Exonucleolytic cleavage in the 3'- to 5'-direction to yield nucleoside 5'-phosphates.. Functionally, possesses two activities: a DNA synthesis (polymerase) and an exonucleolytic activity that degrades single-stranded DNA in the 3'- to 5'-direction. Has a template-primer preference which is characteristic of a replicative DNA polymerase. This chain is DNA polymerase II large subunit, found in Methanoculleus marisnigri (strain ATCC 35101 / DSM 1498 / JR1).